Reading from the N-terminus, the 146-residue chain is Large ribosomal subunit protein uL13 (146 aa).

This sequence belongs to the universal ribosomal protein uL13 family. Part of the 50S ribosomal subunit.

Its function is as follows. This protein is one of the early assembly proteins of the 50S ribosomal subunit, although it is not seen to bind rRNA by itself. It is important during the early stages of 50S assembly. The polypeptide is Large ribosomal subunit protein uL13 (Mycoplasma genitalium (strain ATCC 33530 / DSM 19775 / NCTC 10195 / G37) (Mycoplasmoides genitalium)).